The chain runs to 415 residues: Serine hydroxymethyltransferase (415 aa).

(6S)-5,6,7,8-tetrahydrofolate contacts are provided by residues Leu-121 and 125 to 127 (GHL). Lys-230 carries the post-translational modification N6-(pyridoxal phosphate)lysine. 355-357 (SPF) provides a ligand contact to (6S)-5,6,7,8-tetrahydrofolate.

Belongs to the SHMT family. Homodimer. Pyridoxal 5'-phosphate serves as cofactor.

Its subcellular location is the cytoplasm. It carries out the reaction (6R)-5,10-methylene-5,6,7,8-tetrahydrofolate + glycine + H2O = (6S)-5,6,7,8-tetrahydrofolate + L-serine. Its pathway is one-carbon metabolism; tetrahydrofolate interconversion. It functions in the pathway amino-acid biosynthesis; glycine biosynthesis; glycine from L-serine: step 1/1. Functionally, catalyzes the reversible interconversion of serine and glycine with tetrahydrofolate (THF) serving as the one-carbon carrier. This reaction serves as the major source of one-carbon groups required for the biosynthesis of purines, thymidylate, methionine, and other important biomolecules. Also exhibits THF-independent aldolase activity toward beta-hydroxyamino acids, producing glycine and aldehydes, via a retro-aldol mechanism. The chain is Serine hydroxymethyltransferase from Lactococcus lactis subsp. lactis (strain IL1403) (Streptococcus lactis).